Consider the following 644-residue polypeptide: Threonine--tRNA ligase (644 aa).

The TGS domain occupies 1-61 (MNVTIEGQVF…ADTTTIEPVF (61 aa)). Positions 241–532 (DHRKLGQQLD…LTEHFAGAFP (292 aa)) are catalytic. Residues Cys333, His384, and His509 each contribute to the Zn(2+) site.

It belongs to the class-II aminoacyl-tRNA synthetase family. Homodimer. It depends on Zn(2+) as a cofactor.

It is found in the cytoplasm. The enzyme catalyses tRNA(Thr) + L-threonine + ATP = L-threonyl-tRNA(Thr) + AMP + diphosphate + H(+). In terms of biological role, catalyzes the attachment of threonine to tRNA(Thr) in a two-step reaction: L-threonine is first activated by ATP to form Thr-AMP and then transferred to the acceptor end of tRNA(Thr). Also edits incorrectly charged L-seryl-tRNA(Thr). This is Threonine--tRNA ligase from Nitratidesulfovibrio vulgaris (strain DSM 19637 / Miyazaki F) (Desulfovibrio vulgaris).